The following is a 549-amino-acid chain: Beta-mannosyltransferase 3 (549 aa).

Topologically, residues 1–37 (MFESDLSFYSALLILCCPISIVFFKKFPIKGYTGANK) are cytoplasmic. The helical transmembrane segment at 38-58 (VSLFLQCLIAILNLNILYSFI) threads the bilayer. The Extracellular portion of the chain corresponds to 59–549 (NSLTITLGHD…DTMGWDKLSR (491 aa)).

Belongs to the BMT family.

The protein localises to the membrane. Functionally, beta-mannosyltransferase involved in cell wall biosynthesis. Required for addition of the second beta-mannose residue to acid-stable fraction of cell wall phosphopeptidomannan, and in elongation of beta-mannose chains on the phosphopeptidomannan acid-labile fraction. In Candida albicans (strain SC5314 / ATCC MYA-2876) (Yeast), this protein is Beta-mannosyltransferase 3 (BMT3).